The chain runs to 449 residues: C4-dicarboxylate transport protein (449 aa).

Residues 1–20 (MSALTESFGPVPSAKSKPPA) are disordered. Positions 10 to 20 (PVPSAKSKPPA) are enriched in low complexity. 8 helical membrane-spanning segments follow: residues 28 to 48 (LLYL…WLSP), 66 to 86 (LIKM…IAHI), 101 to 121 (LYFE…GNVV), 167 to 187 (GDIL…MTLG), 205 to 225 (FGVI…AMAF), 241 to 261 (LIAV…GLIA), 326 to 346 (IYMT…LTWT), and 370 to 390 (FITL…GMAI).

This sequence belongs to the dicarboxylate/amino acid:cation symporter (DAACS) (TC 2.A.23) family.

The protein resides in the cell inner membrane. In terms of biological role, responsible for the transport of dicarboxylates such as succinate, fumarate, and malate from the periplasm across the membrane. The sequence is that of C4-dicarboxylate transport protein from Rhodopseudomonas palustris (strain BisB18).